The sequence spans 271 residues: MPELPEVETTLRGLAPHLVGQRIHGVILRRPDLRWPIAEQIEQLLPGATITDVRRRAKYLLIDTDAGGSAVLHLGMSGSLRVLPGDTPPRAHDHVDISLQNGRVLRFNDPRRFGCLLWQRDCETHELLASLGPEPLSPAFTGDYLHALARGRRAAVKTFLMDQAVVVGVGNIYAAESLHRAGISPLREAGKVSRERYRRLADAVKEILAYAIQRGGTTLRDFISPDGAPGYFEQELMVYGREGQACKHCGRELKHATIGQRATVWCAACQR.

Residue proline 2 is the Schiff-base intermediate with DNA of the active site. Catalysis depends on glutamate 3, which acts as the Proton donor. Catalysis depends on lysine 58, which acts as the Proton donor; for beta-elimination activity. DNA is bound by residues histidine 92, arginine 111, and arginine 152. The segment at 237-271 (MVYGREGQACKHCGRELKHATIGQRATVWCAACQR) adopts an FPG-type zinc-finger fold. Arginine 261 (proton donor; for delta-elimination activity) is an active-site residue.

It belongs to the FPG family. Monomer. Zn(2+) is required as a cofactor.

It carries out the reaction Hydrolysis of DNA containing ring-opened 7-methylguanine residues, releasing 2,6-diamino-4-hydroxy-5-(N-methyl)formamidopyrimidine.. It catalyses the reaction 2'-deoxyribonucleotide-(2'-deoxyribose 5'-phosphate)-2'-deoxyribonucleotide-DNA = a 3'-end 2'-deoxyribonucleotide-(2,3-dehydro-2,3-deoxyribose 5'-phosphate)-DNA + a 5'-end 5'-phospho-2'-deoxyribonucleoside-DNA + H(+). Functionally, involved in base excision repair of DNA damaged by oxidation or by mutagenic agents. Acts as a DNA glycosylase that recognizes and removes damaged bases. Has a preference for oxidized purines, such as 7,8-dihydro-8-oxoguanine (8-oxoG). Has AP (apurinic/apyrimidinic) lyase activity and introduces nicks in the DNA strand. Cleaves the DNA backbone by beta-delta elimination to generate a single-strand break at the site of the removed base with both 3'- and 5'-phosphates. This Xanthomonas campestris pv. campestris (strain B100) protein is Formamidopyrimidine-DNA glycosylase.